Consider the following 198-residue polypeptide: uncharacterized protein (198 aa).

4 helical membrane-spanning segments follow: residues 20–40 (VIVG…GLWA), 70–90 (FFVA…TASV), 107–127 (LAIG…LLVW), and 164–184 (VAAT…VLAA).

The protein to M.tuberculosis Rv1591.

It is found in the cell membrane. This is an uncharacterized protein from Mycobacterium leprae (strain TN).